Reading from the N-terminus, the 424-residue chain is Serine--tRNA ligase (424 aa).

L-serine is bound at residue 231-233 (TAE). 262–264 (RSE) provides a ligand contact to ATP. Residue Glu285 coordinates L-serine. An ATP-binding site is contributed by 349-352 (EISS). Residue Ser385 participates in L-serine binding.

Belongs to the class-II aminoacyl-tRNA synthetase family. Type-1 seryl-tRNA synthetase subfamily. In terms of assembly, homodimer. The tRNA molecule binds across the dimer.

It is found in the cytoplasm. The catalysed reaction is tRNA(Ser) + L-serine + ATP = L-seryl-tRNA(Ser) + AMP + diphosphate + H(+). It carries out the reaction tRNA(Sec) + L-serine + ATP = L-seryl-tRNA(Sec) + AMP + diphosphate + H(+). Its pathway is aminoacyl-tRNA biosynthesis; selenocysteinyl-tRNA(Sec) biosynthesis; L-seryl-tRNA(Sec) from L-serine and tRNA(Sec): step 1/1. Catalyzes the attachment of serine to tRNA(Ser). Is also able to aminoacylate tRNA(Sec) with serine, to form the misacylated tRNA L-seryl-tRNA(Sec), which will be further converted into selenocysteinyl-tRNA(Sec). In Bacillus anthracis (strain A0248), this protein is Serine--tRNA ligase.